A 267-amino-acid polypeptide reads, in one-letter code: 3-methyl-2-oxobutanoate hydroxymethyltransferase (267 aa).

Residues D46 and D85 each coordinate Mg(2+). Residues D46–S47, D85, and K115 contribute to the 3-methyl-2-oxobutanoate site. E117 contributes to the Mg(2+) binding site. The Proton acceptor role is filled by E184.

It belongs to the PanB family. As to quaternary structure, homodecamer; pentamer of dimers. The cofactor is Mg(2+).

It is found in the cytoplasm. It catalyses the reaction 3-methyl-2-oxobutanoate + (6R)-5,10-methylene-5,6,7,8-tetrahydrofolate + H2O = 2-dehydropantoate + (6S)-5,6,7,8-tetrahydrofolate. Its pathway is cofactor biosynthesis; (R)-pantothenate biosynthesis; (R)-pantoate from 3-methyl-2-oxobutanoate: step 1/2. In terms of biological role, catalyzes the reversible reaction in which hydroxymethyl group from 5,10-methylenetetrahydrofolate is transferred onto alpha-ketoisovalerate to form ketopantoate. In Geobacter sulfurreducens (strain ATCC 51573 / DSM 12127 / PCA), this protein is 3-methyl-2-oxobutanoate hydroxymethyltransferase.